We begin with the raw amino-acid sequence, 91 residues long: Acylphosphatase (91 aa).

In terms of domain architecture, Acylphosphatase-like spans 3-91; the sequence is HIKVNVKGQV…TELTKFEVKY (89 aa). Active-site residues include R18 and N36.

This sequence belongs to the acylphosphatase family.

The enzyme catalyses an acyl phosphate + H2O = a carboxylate + phosphate + H(+). This Oceanobacillus iheyensis (strain DSM 14371 / CIP 107618 / JCM 11309 / KCTC 3954 / HTE831) protein is Acylphosphatase (acyP).